Consider the following 356-residue polypeptide: Protein SEC13 homolog (356 aa).

WD repeat units follow at residues 11–50, 54–95, 101–142, 149–205, 210–253, and 259–298; these read EHED…KALA, GHQG…DWTK, NHDS…GVWD, AHTI…WVEE, AHSD…SEWT, and TFDD…QWIR. Residues 307 to 356 are disordered; that stretch reads IQSKQPSHLPHSHSQQQQALQQHQQQAPSHPGPSSDSEHSSNLSNSQLSN. Low complexity predominate over residues 308-356; sequence QSKQPSHLPHSHSQQQQALQQHQQQAPSHPGPSSDSEHSSNLSNSQLSN.

This sequence belongs to the WD repeat SEC13 family. Probable component of the nuclear pore complex (NPC). Component of the GATOR complex consisting of mio, Nup44A/Seh1, Im11, Nplr3, Nplr2, Wdr24, Wdr59 and Sec13. Within the GATOR complex, probable component of the GATOR2 subcomplex which is likely composed of mio, Nup44A/Seh1, Wdr24, Wdr59 and Sec13. Interacts with msk. Interacts (preferentially when phosphorylated) with Mad. The GATOR2 complex associates with unmet in the absence of S-adenosyl-L-methionine; the mio-Wdr24-Nup44A subcomplex is essential and sufficient for this interaction while Wdr59 and Sec13 are dispensable. This association acts as a nutrient sensor to inhibit mTORC1 signaling in the absence of methionine. Salivary glands.

Its subcellular location is the nucleus envelope. It localises to the nucleus. The protein localises to the nucleoplasm. The protein resides in the cytoplasm. It is found in the cytoskeleton. Its subcellular location is the microtubule organizing center. It localises to the centrosome. The protein localises to the nuclear pore complex. The protein resides in the cytoplasmic vesicle. It is found in the COPII-coated vesicle membrane. Its subcellular location is the endoplasmic reticulum membrane. It localises to the lysosome membrane. Functionally, functions as a component of the nuclear pore complex (NPC) and the COPII coat. At the endoplasmic reticulum, SEC13 is involved in the biogenesis of COPII-coated vesicles. Recruited to transcriptionally active chromatin at the time of transcription initiation by RNA polymerase II. Required for proper expression of ecdysone-responsive genes such as Eip74EF and Eip75B during larval development. Required for reactivation of transcription after heat shock. Required for nuclear import of phosphorylated Mad via importin msk. Has no role in classical nuclear localization signal (cNLS)-dependent nuclear import via importin-beta. Its function is as follows. A component of the GATOR subcomplex GATOR2 which functions as an activator of the amino acid-sensing branch of the mTORC1 signaling pathway. The two GATOR subcomplexes, GATOR1 and GATOR2, regulate the mTORC1 pathway in order to mediate metabolic homeostasis, female gametogenesis and the response to amino acid limitation and complete starvation. GATOR2 activates the mTORC1 signaling pathway through the inhibition of the GATOR1 subcomplex, controlling the switch to cell proliferation and growth under nutrient replete conditions and during female oocyte development. The polypeptide is Protein SEC13 homolog (Drosophila melanogaster (Fruit fly)).